A 382-amino-acid polypeptide reads, in one-letter code: Mannitol-1-phosphate 5-dehydrogenase (382 aa).

Residue 3-14 participates in NAD(+) binding; the sequence is ALHFGAGNIGRG.

It belongs to the mannitol dehydrogenase family.

The catalysed reaction is D-mannitol 1-phosphate + NAD(+) = beta-D-fructose 6-phosphate + NADH + H(+). The chain is Mannitol-1-phosphate 5-dehydrogenase from Cronobacter sakazakii (strain ATCC BAA-894) (Enterobacter sakazakii).